A 400-amino-acid chain; its full sequence is tRNA-specific adenosine deaminase 1 (400 aa).

In terms of domain architecture, A to I editase spans 76 to 400 (SIATGVKALP…WIPTRTDDVK (325 aa)). His-101 serves as a coordination point for Zn(2+). Glu-103 (proton donor) is an active-site residue. 1D-myo-inositol hexakisphosphate is bound at residue Arg-108. 2 residues coordinate Zn(2+): Cys-157 and Cys-223. 4 residues coordinate 1D-myo-inositol hexakisphosphate: Lys-226, Arg-232, Lys-369, and Arg-375.

Belongs to the ADAT1 family. The cofactor is 1D-myo-inositol hexakisphosphate. Requires Zn(2+) as cofactor.

It catalyses the reaction adenosine(37) in tRNA(Ala) + H2O + H(+) = inosine(37) in tRNA(Ala) + NH4(+). Functionally, deaminates adenosine-37 to inosine in tRNA-Ala. The polypeptide is tRNA-specific adenosine deaminase 1 (TAD1) (Saccharomyces cerevisiae (strain ATCC 204508 / S288c) (Baker's yeast)).